The following is a 225-amino-acid chain: Histone H3-like centromeric protein cid (225 aa).

Basic residues predominate over residues 1–11 (MPRHSRAKRAP). Residues 1 to 131 (MPRHSRAKRA…KAANPMSRAK (131 aa)) form a disordered region. Residues 43–52 (FTTSQLTLQD) are compositionally biased toward polar residues. A phosphoserine mark is found at serine 74 and serine 75. Position 76 is a phosphothreonine (threonine 76). Serine 77 bears the Phosphoserine mark. Residues 86–103 (RYPTTRSPQTRRMTVQQE) are compositionally biased toward polar residues. The segment at 133–225 (MDREIRRLQH…AYICDRGRQF (93 aa)) is H3-like.

This sequence belongs to the histone H3 family. Forms a nucleosome-like histone octamer containing two molecules each of H2A, H2B, cid and H4 assembled in one cid-H4 heterotetramer and two H2A-H2B heterodimers. The cid-H4 heterotetramer is more compact and structurally more rigid than corresponding H3-H4 heterotetramers. Interacts with the condensin subunit Cap-G. Interacts with Chrac-14.

The protein localises to the nucleus. The protein resides in the chromosome. It is found in the centromere. Its subcellular location is the kinetochore. Histone H3-like variant which exclusively replaces conventional H3 in the nucleosome core of centromeric chromatin at the inner plate of the kinetochore. Required for recruitment and assembly of kinetochore proteins, mitotic progression and chromosome segregation. May serve as an epigenetic mark that propagates centromere identity through replication and cell division. The chain is Histone H3-like centromeric protein cid from Drosophila melanogaster (Fruit fly).